Here is a 74-residue protein sequence, read N- to C-terminus: MKLLLKNINELAAKQKSEGLTAFEKERQAALRQEYLKKIRGTVQDNLHHVTIIDPLGDDVTPKKLKEIQAELRG.

It belongs to the UPF0291 family.

Its subcellular location is the cytoplasm. This is UPF0291 protein lmo0496 from Listeria monocytogenes serovar 1/2a (strain ATCC BAA-679 / EGD-e).